Here is a 130-residue protein sequence, read N- to C-terminus: Fluoride-specific ion channel FluC (130 aa).

The next 4 helical transmembrane spans lie at 3 to 23 (FIFLWAALGGAIGSSLRYFVG), 39 to 59 (GTFSVNVIGCFVIGFMGHLAV), 67 to 87 (FGIFFVTGVLGGFTTFSSYGL), and 102 to 122 (VSYALGTNILGLIGVAIGWFL). G77 and T80 together coordinate Na(+).

This sequence belongs to the fluoride channel Fluc/FEX (TC 1.A.43) family.

The protein localises to the cell inner membrane. It carries out the reaction fluoride(in) = fluoride(out). With respect to regulation, na(+) is not transported, but it plays an essential structural role and its presence is essential for fluoride channel function. In terms of biological role, fluoride-specific ion channel. Important for reducing fluoride concentration in the cell, thus reducing its toxicity. This chain is Fluoride-specific ion channel FluC, found in Helicobacter pylori (strain Shi470).